We begin with the raw amino-acid sequence, 151 residues long: Large ribosomal subunit protein bL9 (151 aa).

The protein belongs to the bacterial ribosomal protein bL9 family.

Functionally, binds to the 23S rRNA. The sequence is that of Large ribosomal subunit protein bL9 from Oenococcus oeni (strain ATCC BAA-331 / PSU-1).